Consider the following 481-residue polypeptide: Ribosomal RNA small subunit methyltransferase F (481 aa).

S-adenosyl-L-methionine is bound by residues 119 to 125 (ASAPGSK), glutamate 143, aspartate 170, and aspartate 188. Catalysis depends on cysteine 241, which acts as the Nucleophile.

This sequence belongs to the class I-like SAM-binding methyltransferase superfamily. RsmB/NOP family.

The protein resides in the cytoplasm. The catalysed reaction is cytidine(1407) in 16S rRNA + S-adenosyl-L-methionine = 5-methylcytidine(1407) in 16S rRNA + S-adenosyl-L-homocysteine + H(+). Functionally, specifically methylates the cytosine at position 1407 (m5C1407) of 16S rRNA. The chain is Ribosomal RNA small subunit methyltransferase F from Shewanella sp. (strain MR-4).